A 414-amino-acid polypeptide reads, in one-letter code: 26S proteasome regulatory subunit 8 homolog (414 aa).

197–204 (GPPGTGKT) contacts ATP.

It belongs to the AAA ATPase family.

Its subcellular location is the cytoplasm. It localises to the nucleus. The 26S proteasome is involved in the ATP-dependent degradation of ubiquitinated proteins. The regulatory (or ATPase) complex confers ATP dependency and substrate specificity to the 26S complex. In Naegleria fowleri (Brain eating amoeba), this protein is 26S proteasome regulatory subunit 8 homolog.